We begin with the raw amino-acid sequence, 160 residues long: Transcription elongation factor GreA (160 aa).

Positions 3–84 (NIVDDKILLT…SKAKIIKADL (82 aa)) form a coiled coil.

The protein belongs to the GreA/GreB family.

In terms of biological role, necessary for efficient RNA polymerase transcription elongation past template-encoded arresting sites. The arresting sites in DNA have the property of trapping a certain fraction of elongating RNA polymerases that pass through, resulting in locked ternary complexes. Cleavage of the nascent transcript by cleavage factors such as GreA or GreB allows the resumption of elongation from the new 3'terminus. GreA releases sequences of 2 to 3 nucleotides. The protein is Transcription elongation factor GreA of Mesomycoplasma hyopneumoniae (strain J / ATCC 25934 / NCTC 10110) (Mycoplasma hyopneumoniae).